Here is a 151-residue protein sequence, read N- to C-terminus: SsrA-binding protein (151 aa).

This sequence belongs to the SmpB family.

The protein localises to the cytoplasm. Functionally, required for rescue of stalled ribosomes mediated by trans-translation. Binds to transfer-messenger RNA (tmRNA), required for stable association of tmRNA with ribosomes. tmRNA and SmpB together mimic tRNA shape, replacing the anticodon stem-loop with SmpB. tmRNA is encoded by the ssrA gene; the 2 termini fold to resemble tRNA(Ala) and it encodes a 'tag peptide', a short internal open reading frame. During trans-translation Ala-aminoacylated tmRNA acts like a tRNA, entering the A-site of stalled ribosomes, displacing the stalled mRNA. The ribosome then switches to translate the ORF on the tmRNA; the nascent peptide is terminated with the 'tag peptide' encoded by the tmRNA and targeted for degradation. The ribosome is freed to recommence translation, which seems to be the essential function of trans-translation. In Geotalea uraniireducens (strain Rf4) (Geobacter uraniireducens), this protein is SsrA-binding protein.